Here is a 498-residue protein sequence, read N- to C-terminus: Phenylalanine--tRNA ligase alpha subunit (498 aa).

Residues Thr328, 372 to 374 (QVE), and Tyr412 contribute to the L-phenylalanine site. Residue Glu414 coordinates Mg(2+). Position 438 (Phe438) interacts with L-phenylalanine.

The protein belongs to the class-II aminoacyl-tRNA synthetase family. Phe-tRNA synthetase alpha subunit type 2 subfamily. Tetramer of two alpha and two beta subunits. The cofactor is Mg(2+).

It localises to the cytoplasm. It catalyses the reaction tRNA(Phe) + L-phenylalanine + ATP = L-phenylalanyl-tRNA(Phe) + AMP + diphosphate + H(+). The sequence is that of Phenylalanine--tRNA ligase alpha subunit from Drosophila melanogaster (Fruit fly).